The chain runs to 491 residues: Lysosomal Pro-X carboxypeptidase (491 aa).

An N-terminal signal peptide occupies residues 1–17 (MGCRALLLLSFLLLGAA). Positions 18–43 (TTIPPRLKTLGSPHLSASPTPDPAVA) are excised as a propeptide. N-linked (GlcNAc...) asparagine glycosylation occurs at Asn-99. The Charge relay system role is filled by Ser-177. The tract at residues 192–332 (HIVVGALAAS…QNIFQALSVY (141 aa)) is SKS domain. 4 disulfides stabilise this stretch: Cys-213–Cys-370, Cys-231–Cys-308, Cys-262–Cys-341, and Cys-362–Cys-392. N-linked (GlcNAc...) asparagine glycans are attached at residues Asn-315, Asn-334, and Asn-343. A glycan (N-linked (GlcNAc...) asparagine) is linked at Asn-413. Active-site charge relay system residues include Asp-428 and His-453.

Belongs to the peptidase S28 family. In terms of assembly, homodimer.

It is found in the lysosome. The catalysed reaction is Cleavage of a -Pro-|-Xaa bond to release a C-terminal amino acid.. Functionally, cleaves C-terminal amino acids linked to proline in peptides such as angiotensin II, III and des-Arg9-bradykinin. This cleavage occurs at acidic pH, but enzymatic activity is retained with some substrates at neutral pH. The chain is Lysosomal Pro-X carboxypeptidase (Prcp) from Mus musculus (Mouse).